Consider the following 150-residue polypeptide: Large ribosomal subunit protein bL9 (150 aa).

The protein belongs to the bacterial ribosomal protein bL9 family.

Its function is as follows. Binds to the 23S rRNA. This is Large ribosomal subunit protein bL9 from Shewanella putrefaciens (strain CN-32 / ATCC BAA-453).